A 271-amino-acid polypeptide reads, in one-letter code: Phosphatidylinositol transfer protein beta isoform (271 aa).

The residue at position 215 (Lys215) is an N6-acetyllysine. Ser262 bears the Phosphoserine; by PKC mark.

This sequence belongs to the PtdIns transfer protein family. PI transfer class I subfamily. Constitutive phosphorylation of Ser-262 has no effect on phospholipid transfer activity but is required for Golgi targeting.

The protein resides in the golgi apparatus. It localises to the golgi apparatus membrane. It is found in the endoplasmic reticulum membrane. It catalyses the reaction a 1,2-diacyl-sn-glycero-3-phosphocholine(in) = a 1,2-diacyl-sn-glycero-3-phosphocholine(out). It carries out the reaction a 1,2-diacyl-sn-glycero-3-phospho-(1D-myo-inositol)(in) = a 1,2-diacyl-sn-glycero-3-phospho-(1D-myo-inositol)(out). The enzyme catalyses an N-(acyl)-sphingosylphosphocholine(in) = an N-(acyl)-sphingosylphosphocholine(out). Catalyzes the transfer of phosphatidylinositol, phosphatidylcholine and sphingomyelin between membranes. Required for COPI-mediated retrograde transport from the Golgi to the endoplasmic reticulum; phosphatidylinositol and phosphatidylcholine transfer activity is essential for this function. This chain is Phosphatidylinositol transfer protein beta isoform (Pitpnb), found in Mus musculus (Mouse).